A 349-amino-acid chain; its full sequence is MMRWGRKKPVSSSSSSGLSRALPVSWFSKLSGSSDLKPAKEKKQDEKASQNISVKTSLSSTTRRSDIHENSKRFQRVSVEKENSATRSADKESNEKFEEIMSSVRKKVRDFQKETCGFLEVEAMDRDNGTVILTPRIQVNRDKQRCERRDQRLLEQKPKRSEQDAGVKVKKPARRTGTGGYSREDSVILGHTITKPAHQWEKLKEVKLREVKLKADQQRKSLYLKRELNRIGTKENNKVRVFSPRASEKCRVKAIEDLKKAKQRAREHELLIETADGGMENESFAVVKCSSDPQKDFRDSMIEMIMENGINHPEELKELLVCYLRLNTDEYHDMIISVFQQVHNDFNFH.

Disordered regions lie at residues 1-20, 29-94, and 143-183; these read MMRWGRKKPVSSSSSSGLSR, KLSG…KESN, and KQRC…GYSR. Low complexity predominate over residues 10–20; the sequence is VSSSSSSGLSR. The span at 37–48 shows a compositional bias: basic and acidic residues; that stretch reads KPAKEKKQDEKA. The span at 49–62 shows a compositional bias: polar residues; it reads SQNISVKTSLSSTT. 2 stretches are compositionally biased toward basic and acidic residues: residues 63–94 and 143–167; these read RRSDIHENSKRFQRVSVEKENSATRSADKESN and KQRCERRDQRLLEQKPKRSEQDAGV. The 60-residue stretch at 286-345 folds into the OVATE domain; sequence VVKCSSDPQKDFRDSMIEMIMENGINHPEELKELLVCYLRLNTDEYHDMIISVFQQVHND.

Interacts with BLH1, BLH2, BLH3, BLH4, BLH6 and BLH10. Expressed in roots, rosette and cauline leaves, and flower buds.

It localises to the nucleus. In terms of biological role, transcriptional repressor that regulates multiple aspects of plant growth and development through the regulation of BEL1-LIKE (BLH) and KNOX TALE (KNAT) homeodomain transcription factors. Required for embryo development. This Arabidopsis thaliana (Mouse-ear cress) protein is Transcription repressor OFP5 (OFP5).